The chain runs to 152 residues: DNA-binding transcriptional activator DecR (152 aa).

In terms of domain architecture, HTH asnC-type spans leucine 2–glycine 63. The segment at residues leucine 21–lysine 40 is a DNA-binding region (H-T-H motif).

Its function is as follows. Plays a role in L-cysteine detoxification. Binds to the dlsT(yhaO)-yhaM operon promoter in the presence but not absence of L-cysteine; activates transcription from the dlsT(yhaO)-yhaM operon. In Escherichia coli O157:H7, this protein is DNA-binding transcriptional activator DecR (decR).